The primary structure comprises 132 residues: Small ribosomal subunit protein uS8c (132 aa).

It belongs to the universal ribosomal protein uS8 family. Part of the 30S ribosomal subunit.

The protein resides in the plastid. Its subcellular location is the chloroplast. One of the primary rRNA binding proteins, it binds directly to 16S rRNA central domain where it helps coordinate assembly of the platform of the 30S subunit. This Illicium oligandrum (Star anise) protein is Small ribosomal subunit protein uS8c (rps8).